A 346-amino-acid chain; its full sequence is Secreted frizzled-related protein 4 (346 aa).

An N-terminal signal peptide occupies residues 1 to 18 (MFLSILVALCLWLHLALG). In terms of domain architecture, FZ spans 19–139 (VRGAPCEAVR…VYDRGVCISP (121 aa)). Cystine bridges form between C24/C85, C32/C78, C69/C108, C97/C136, and C101/C125. 2 N-linked (GlcNAc...) asparagine glycosylation sites follow: N38 and N68. N-linked (GlcNAc...) asparagine glycans are attached at residues N116, N194, and N240. In terms of domain architecture, NTR spans 178–307 (CKCKKVKPTL…IQDKKKTAGR (130 aa)). Basic and acidic residues predominate over residues 294-303 (QRRTIQDKKK). A disordered region spans residues 294–346 (QRRTIQDKKKTAGRTSRSNPPKPKGKPPAPKPASPKKNIKTRSAQKKTNPKKV). Residues 313 to 326 (PPKPKGKPPAPKPA) show a composition bias toward pro residues. Residues 330 to 346 (KNIKTRSAQKKTNPKKV) show a composition bias toward basic residues.

The protein belongs to the secreted frizzled-related protein (sFRP) family.

The protein resides in the secreted. In terms of biological role, soluble frizzled-related proteins (sFRPS) function as modulators of Wnt signaling through direct interaction with Wnts. They have a role in regulating cell growth and differentiation in specific cell types. SFRP4 plays a role in bone morphogenesis. May also act as a regulator of adult uterine morphology and function. May also increase apoptosis during ovulation possibly through modulation of FZ1/FZ4/WNT4 signaling. Has phosphaturic effects by specifically inhibiting sodium-dependent phosphate uptake. In Macaca mulatta (Rhesus macaque), this protein is Secreted frizzled-related protein 4 (SFRP4).